The sequence spans 432 residues: RING finger protein 44 (432 aa).

The interval 1-86 (MRPWALAVTR…GGSPRMLHPA (86 aa)) is disordered. Over residues 56-65 (QQPPSRPPHL) the composition is skewed to pro residues. An RING-type; atypical zinc finger spans residues 380–421 (CVVCFSDFEARQLLRVLPCNHEFHTKCVDKWLKANRTCPICR).

This Homo sapiens (Human) protein is RING finger protein 44 (RNF44).